Reading from the N-terminus, the 362-residue chain is 3-isopropylmalate dehydrogenase (362 aa).

An NAD(+)-binding site is contributed by 77–88; the sequence is GPKWGTGAVRPE. Residues Arg95, Arg105, Arg134, and Asp223 each contribute to the substrate site. Asp223, Asp248, and Asp252 together coordinate Mg(2+). 287-298 serves as a coordination point for NAD(+); that stretch reads GSAPDLPANKVN.

The protein belongs to the isocitrate and isopropylmalate dehydrogenases family. Homodimer. Mg(2+) is required as a cofactor. It depends on Mn(2+) as a cofactor.

The protein resides in the cytoplasm. It catalyses the reaction (2R,3S)-3-isopropylmalate + NAD(+) = 4-methyl-2-oxopentanoate + CO2 + NADH. The protein operates within amino-acid biosynthesis; L-leucine biosynthesis; L-leucine from 3-methyl-2-oxobutanoate: step 3/4. In terms of biological role, catalyzes the oxidation of 3-carboxy-2-hydroxy-4-methylpentanoate (3-isopropylmalate) to 3-carboxy-4-methyl-2-oxopentanoate. The product decarboxylates to 4-methyl-2 oxopentanoate. This is 3-isopropylmalate dehydrogenase (LEU2) from Kluyveromyces lactis (strain ATCC 8585 / CBS 2359 / DSM 70799 / NBRC 1267 / NRRL Y-1140 / WM37) (Yeast).